The following is a 298-amino-acid chain: MSFKKETPLANAVFWAARKGNLALLQLLLNSGRVDVDCKDAYGTTALMVASYSGHYECVRELIMQGADINLQRETGSTALFFASQQGHNEIVKLLFEFGASTEFQTKDGGTALCAACQFGHSRVVDTLLKNGANVHDQLNDGATALFLASQEGHVNLIRQLLSSGAKVNQPREDGTAPLWMAAQMGHSEVVKVLLLRGADRDADRKDGSTALFKAAHKGHCSVMEELLKFSPSLGILKNGSTALHAAVMGGSLKAVDLLLKANADPALPNTNNELPRDLTKSERILRVLRLPLMNGES.

8 ANK repeats span residues 8 to 38, 42 to 71, 75 to 104, 108 to 137, 141 to 170, 174 to 203, 207 to 236, and 239 to 268; these read PLAN…DVDC, YGTT…DINL, TGST…STEF, DGGT…NVHD, DGAT…KVNQ, DGTA…DRDA, DGST…SLGI, and NGST…DPAL.

This chain is Ankyrin repeat domain-containing protein 29 (ankrd29), found in Danio rerio (Zebrafish).